The chain runs to 336 residues: Transcription factor MYB29 (336 aa).

HTH myb-type domains follow at residues 9–65 (GEGL…KPDI) and 66–116 (KRGE…KKLL). DNA-binding regions (H-T-H motif) lie at residues 37-61 (WRDI…ANYL) and 89-112 (WSVI…NTHL). The disordered stretch occupies residues 127–170 (KPLAYDSNPDEQSQSGSISPKSLPPSSSKNVPEITSSDETPKYD). The segment covering 141–154 (SGSISPKSLPPSSS) has biased composition (low complexity). Residues 155-164 (KNVPEITSSD) are compositionally biased toward polar residues.

As to quaternary structure, can form complexes with MYC2, MYC3 or MYC4. In terms of tissue distribution, expressed in both vegetative and generative organs. Mostly present in seedlings, inflorescences, roots and stems, and, to a lower extent, in leaves (in midvein and trichomes) and siliques.

The protein resides in the nucleus. Functionally, plays a minor rheostat role in aliphatic glucosinolates (GLSs) biosynthesis, mostly short chained. Together with MYB28/HAG1 and MYB76/HAG2, promotes aliphatic glucosinolate biosynthesis but represses indolic glucosinolate biosynthesis. Prevents insect performance (e.g. lepidopteran insect Mamestra brassicae) by promoting glucosinolates. The chain is Transcription factor MYB29 (MYB29) from Arabidopsis thaliana (Mouse-ear cress).